Consider the following 413-residue polypeptide: MDFTNLKNTDPELLDMIKKEEERQEYNIELIASENFTSLSVMEAMGSLLTNKYAEGYPHKRYYGGCEFVDEVEDLARERLKKLFAAEHANVQPHSGSQANMAVYMSVLQTGDTILGMDLSHGGHLTHGSPVNFSGKLYNFISYGVDKETETIDYDQLKKIALENRPKMIVSGASAYPRIIDFEKIREICDEIDAYMMVDMAHIAGLVATGLHPSPVPYADFVTTTTHKTLRGPRGGAILCKEKYAKAVDKAIFPGIQGGPLMHTIAAKAVCFREALREDYKEYMQQVVKNTKVLGEELKNYGFRLISGGTDNHLLLIDLTNKNITGKDAEKLLDSVGITVNKNTIPFETLSPFITSGIRIGTPAVTTRGFKEEEMKKIAYFMNYSIEHREENLSQIKEQIKEICKKYPLYQNA.

(6S)-5,6,7,8-tetrahydrofolate is bound by residues leucine 119 and 123-125; that span reads GHL. Lysine 228 is modified (N6-(pyridoxal phosphate)lysine). A (6S)-5,6,7,8-tetrahydrofolate-binding site is contributed by 351 to 353; that stretch reads SPF.

Belongs to the SHMT family. In terms of assembly, homodimer. It depends on pyridoxal 5'-phosphate as a cofactor.

The protein localises to the cytoplasm. The enzyme catalyses (6R)-5,10-methylene-5,6,7,8-tetrahydrofolate + glycine + H2O = (6S)-5,6,7,8-tetrahydrofolate + L-serine. It functions in the pathway one-carbon metabolism; tetrahydrofolate interconversion. It participates in amino-acid biosynthesis; glycine biosynthesis; glycine from L-serine: step 1/1. Catalyzes the reversible interconversion of serine and glycine with tetrahydrofolate (THF) serving as the one-carbon carrier. This reaction serves as the major source of one-carbon groups required for the biosynthesis of purines, thymidylate, methionine, and other important biomolecules. Also exhibits THF-independent aldolase activity toward beta-hydroxyamino acids, producing glycine and aldehydes, via a retro-aldol mechanism. This Clostridium botulinum (strain Langeland / NCTC 10281 / Type F) protein is Serine hydroxymethyltransferase.